A 325-amino-acid polypeptide reads, in one-letter code: NADH-quinone oxidoreductase subunit H (325 aa).

9 consecutive transmembrane segments (helical) span residues 11 to 31, 50 to 69, 81 to 101, 114 to 134, 154 to 174, 186 to 206, 237 to 257, 265 to 285, and 304 to 324; these read ILLS…CGAF, NRVG…KMFF, VIFT…FAIV, IGIL…LFAG, VSYE…AGSF, LWNV…GVAV, FFVG…TLFF, LPPF…FILI, and VCLP…LWQA.

It belongs to the complex I subunit 1 family. In terms of assembly, NDH-1 is composed of 13 different subunits. Subunits NuoA, H, J, K, L, M, N constitute the membrane sector of the complex.

The protein localises to the cell inner membrane. The enzyme catalyses a quinone + NADH + 5 H(+)(in) = a quinol + NAD(+) + 4 H(+)(out). In terms of biological role, NDH-1 shuttles electrons from NADH, via FMN and iron-sulfur (Fe-S) centers, to quinones in the respiratory chain. The immediate electron acceptor for the enzyme in this species is believed to be ubiquinone. Couples the redox reaction to proton translocation (for every two electrons transferred, four hydrogen ions are translocated across the cytoplasmic membrane), and thus conserves the redox energy in a proton gradient. This subunit may bind ubiquinone. The polypeptide is NADH-quinone oxidoreductase subunit H (Salmonella arizonae (strain ATCC BAA-731 / CDC346-86 / RSK2980)).